Reading from the N-terminus, the 390-residue chain is 2-oxoisovalerate dehydrogenase subunit beta, mitochondrial (390 aa).

The N-terminal 48 residues, 1-48 (MAAVAARAGGLLWLRAAGAERRRCGLRCAALVQGFLQPGGEDTAQKRR), are a transit peptide targeting the mitochondrion. Thiamine diphosphate is bound at residue Tyr-150. The K(+) site is built by Gly-176, Leu-178, Thr-179, Cys-226, and Asp-229. The residue at position 230 (Lys-230) is an N6-acetyllysine. Asn-231 is a binding site for K(+). At Lys-239 the chain carries N6-acetyllysine.

As to quaternary structure, heterotetramer of 2 alpha/BCKDHA and 2 beta chains/BCKDHB that forms the branched-chain alpha-keto acid decarboxylase (E1) component of the BCKD complex. The branched-chain alpha-ketoacid dehydrogenase is a large complex composed of three major building blocks E1, E2 and E3. It is organized around E2, a 24-meric cubic core composed of DBT, to which are associated 6 to 12 copies of E1, and approximately 6 copies of the dehydrogenase E3, a DLD dimer. It depends on thiamine diphosphate as a cofactor.

It is found in the mitochondrion matrix. It carries out the reaction N(6)-[(R)-lipoyl]-L-lysyl-[protein] + 3-methyl-2-oxobutanoate + H(+) = N(6)-[(R)-S(8)-2-methylpropanoyldihydrolipoyl]-L-lysyl-[protein] + CO2. Together with BCKDHA forms the heterotetrameric E1 subunit of the mitochondrial branched-chain alpha-ketoacid dehydrogenase (BCKD) complex. The BCKD complex catalyzes the multi-step oxidative decarboxylation of alpha-ketoacids derived from the branched-chain amino-acids valine, leucine and isoleucine producing CO2 and acyl-CoA which is subsequently utilized to produce energy. The E1 subunit catalyzes the first step with the decarboxylation of the alpha-ketoacid forming an enzyme-product intermediate. A reductive acylation mediated by the lipoylamide cofactor of E2 extracts the acyl group from the E1 active site for the next step of the reaction. The polypeptide is 2-oxoisovalerate dehydrogenase subunit beta, mitochondrial (Mus musculus (Mouse)).